The chain runs to 303 residues: WD repeat-containing protein 38 (303 aa).

7 WD repeats span residues 24 to 63, 66 to 105, 108 to 147, 150 to 189, 195 to 233, 236 to 277, and 279 to 303; these read QHHG…LLWR, GHRG…CLHV, GHQR…RVHL, GHCD…PVVS, GHTG…LPLQ, GHTI…ETLK, and MLDV…AVTR.

This chain is WD repeat-containing protein 38 (Wdr38), found in Mus musculus (Mouse).